The primary structure comprises 445 residues: Phosphoglucosamine mutase (445 aa).

The active-site Phosphoserine intermediate is serine 102. Residues serine 102, aspartate 241, aspartate 243, and aspartate 245 each contribute to the Mg(2+) site. The residue at position 102 (serine 102) is a Phosphoserine.

It belongs to the phosphohexose mutase family. Requires Mg(2+) as cofactor. In terms of processing, activated by phosphorylation.

It carries out the reaction alpha-D-glucosamine 1-phosphate = D-glucosamine 6-phosphate. In terms of biological role, catalyzes the conversion of glucosamine-6-phosphate to glucosamine-1-phosphate. In Shewanella sp. (strain ANA-3), this protein is Phosphoglucosamine mutase.